Reading from the N-terminus, the 650-residue chain is Probable protein phosphatase 2C 36 (650 aa).

The interval 146-166 (SGKKTKEKAKLKKSGSKSFTK) is disordered. Positions 148–166 (KKTKEKAKLKKSGSKSFTK) are enriched in basic residues. Residues 239 to 641 (ESALEEPKIQ…DDVSVIVISL (403 aa)) form the PPM-type phosphatase domain. Asp-276, Gly-277, Asp-569, and Asp-632 together coordinate Mn(2+).

This sequence belongs to the PP2C family. Mg(2+) serves as cofactor. Mn(2+) is required as a cofactor.

The protein localises to the nucleus. It carries out the reaction O-phospho-L-seryl-[protein] + H2O = L-seryl-[protein] + phosphate. It catalyses the reaction O-phospho-L-threonyl-[protein] + H2O = L-threonyl-[protein] + phosphate. The sequence is that of Probable protein phosphatase 2C 36 (PLL3) from Arabidopsis thaliana (Mouse-ear cress).